A 200-amino-acid chain; its full sequence is Male-specific histamine-binding salivary protein (200 aa).

The N-terminal stretch at 1-18 (MKVLLLVLGAALCQNADA) is a signal peptide. Histamine is bound by residues serine 37, aspartate 41, aspartate 56, and tryptophan 59. Intrachain disulfides connect cysteine 65–cysteine 193 and cysteine 137–cysteine 169. The N-linked (GlcNAc...) asparagine glycan is linked to asparagine 79. Residues glutamate 97, tyrosine 115, phenylalanine 125, aspartate 138, glutamate 154, and tryptophan 156 each coordinate histamine.

This sequence belongs to the calycin superfamily. Histamine-binding salivary protein family. Homodimer; disulcde-linked. Post-translationally, N-glycosylated. As to expression, expressed in salivary glands.

The protein localises to the secreted. In terms of biological role, salivary tick protein that acts by scavenging histamine at the wound site, outcompeting histamine receptors for histamine, thereby overcoming host inflammatory responses. Binds histamine with a high-affinity (Kd=1.2 nM). Contains two binding histamine sites (H and L), that appear to bind histamine with differing affinities. The protein is Male-specific histamine-binding salivary protein of Rhipicephalus appendiculatus (Brown ear tick).